The chain runs to 138 residues: MESFVAMKVVCITVLFVIVAVNESATSEANTSNAAKDTKKTNVTLQFPNYIPNPKQLALKLLEICKNNKSSLNSLTARSSTNYYAINDKYVDFKYYTFLCKHDKDRNVTLNMPPDTPCGPNGQKCANKSQCVGHIPGC.

A signal peptide spans 1-21; it reads MESFVAMKVVCITVLFVIVAV. 5 N-linked (GlcNAc...) asparagine glycosylation sites follow: Asn30, Asn42, Asn68, Asn107, and Asn127. Positions 119–138 are CD4-binding; that stretch reads GPNGQKCANKSQCVGHIPGC.

It belongs to the salp15 family. In terms of assembly, interacts with host CD4. Interacts with host DC-SIGN (CD209). Interacts with Borrelia outer surface protein C (OspC). Expressed in salivary glands.

It is found in the secreted. In terms of biological role, salivary tick protein that downregulates host immune system by binding to both dendritic cells, and CD4(+) T cells. Specifically binds to the CD4 coreceptor on T cells. This interaction prevents the activation of the Src kinase, Lck, and its downstream substrate Zap-70, and results in deficient activation of PLCgamma1, the repression of calcium fluxes triggered by T-cell antigen receptor (TCR) ligation, and a subsequent reduction in interleukin-2 production. This salivary protein also binds to DC-SIGN (CD209) on dendritic cells (DC) and activates the Raf-1 kinase/MEK signaling pathway that results in down-regulating expression of pro-inflammatory cytokines. Furthermore, it inhibits T cell proliferation induced by DCs. It also inhibits in vitro keratinocyte inflammation induced by Borrelia burgdorferi or by the major outer surface protein (OspC) of Borrelia. In addition, it downregulates chemokines and monocyte chemoattractant protein 1, as well as several antimicrobial peptides such as defensins, cathelicidin, psoriasin, and RNase 7. Apart from its immunomodulatory activities, it is also associated with protection of Borrelia spirochetes from antibody-mediated killing through its binding to OspC. In vivo, tests on different immune disease animal models show promising therapeutic results, e.g., in inhibiting HIV infection, experimental autoimmune encephalomyelitis, transplantation rejection, and asthma. The chain is Salivary protein 15 Iper-3 from Ixodes persulcatus (Taiga tick).